Consider the following 604-residue polypeptide: Aspartate--tRNA(Asp/Asn) ligase (604 aa).

Glu175 is a binding site for L-aspartate. Positions 199 to 202 (QQFK) are aspartate. Positions 221 and 456 each coordinate L-aspartate. ATP is bound at residue 221–223 (RDE). Glu496 contacts ATP. Arg503 contributes to the L-aspartate binding site. 548–551 (GVDR) lines the ATP pocket.

Belongs to the class-II aminoacyl-tRNA synthetase family. Type 1 subfamily. In terms of assembly, homodimer.

The protein localises to the cytoplasm. It carries out the reaction tRNA(Asx) + L-aspartate + ATP = L-aspartyl-tRNA(Asx) + AMP + diphosphate. Its function is as follows. Aspartyl-tRNA synthetase with relaxed tRNA specificity since it is able to aspartylate not only its cognate tRNA(Asp) but also tRNA(Asn). Reaction proceeds in two steps: L-aspartate is first activated by ATP to form Asp-AMP and then transferred to the acceptor end of tRNA(Asp/Asn). This chain is Aspartate--tRNA(Asp/Asn) ligase, found in Methylobacterium sp. (strain 4-46).